The following is a 432-amino-acid chain: Adenylosuccinate synthetase (432 aa).

GTP is bound by residues 13 to 19 (GDEGKGK) and 41 to 43 (GHT). The active-site Proton acceptor is the D14. Mg(2+)-binding residues include D14 and G41. IMP is bound by residues 14 to 17 (DEGK), 39 to 42 (NAGH), T130, R144, Q225, T240, and R304. Catalysis depends on H42, which acts as the Proton donor. 300–306 (AVTGRPR) serves as a coordination point for substrate. Residues R306, 332-334 (KLD), and 415-417 (STG) each bind GTP.

It belongs to the adenylosuccinate synthetase family. In terms of assembly, homodimer. The cofactor is Mg(2+).

The protein resides in the cytoplasm. The enzyme catalyses IMP + L-aspartate + GTP = N(6)-(1,2-dicarboxyethyl)-AMP + GDP + phosphate + 2 H(+). The protein operates within purine metabolism; AMP biosynthesis via de novo pathway; AMP from IMP: step 1/2. In terms of biological role, plays an important role in the de novo pathway of purine nucleotide biosynthesis. Catalyzes the first committed step in the biosynthesis of AMP from IMP. The polypeptide is Adenylosuccinate synthetase (Haemophilus ducreyi (strain 35000HP / ATCC 700724)).